A 184-amino-acid polypeptide reads, in one-letter code: Shikimate kinase (184 aa).

Residue 17 to 22 coordinates ATP; sequence GAGKTT. Thr-21 contributes to the Mg(2+) binding site. Residues Asp-39, Arg-63, and Gly-85 each coordinate substrate. Arg-123 is an ATP binding site. Position 142 (Arg-142) interacts with substrate.

Belongs to the shikimate kinase family. As to quaternary structure, monomer. The cofactor is Mg(2+).

The protein resides in the cytoplasm. It catalyses the reaction shikimate + ATP = 3-phosphoshikimate + ADP + H(+). It functions in the pathway metabolic intermediate biosynthesis; chorismate biosynthesis; chorismate from D-erythrose 4-phosphate and phosphoenolpyruvate: step 5/7. Catalyzes the specific phosphorylation of the 3-hydroxyl group of shikimic acid using ATP as a cosubstrate. This Burkholderia thailandensis (strain ATCC 700388 / DSM 13276 / CCUG 48851 / CIP 106301 / E264) protein is Shikimate kinase.